The sequence spans 205 residues: GTP cyclohydrolase-2 (205 aa).

GTP is bound at residue 49 to 53 (RLHSE). 3 residues coordinate Zn(2+): C54, C65, and C67. Residues Q70, 92-94 (EGR), and T114 contribute to the GTP site. D126 functions as the Proton acceptor in the catalytic mechanism. R128 serves as the catalytic Nucleophile. GTP contacts are provided by T149 and K154.

This sequence belongs to the GTP cyclohydrolase II family. Zn(2+) is required as a cofactor.

The catalysed reaction is GTP + 4 H2O = 2,5-diamino-6-hydroxy-4-(5-phosphoribosylamino)-pyrimidine + formate + 2 phosphate + 3 H(+). It participates in cofactor biosynthesis; riboflavin biosynthesis; 5-amino-6-(D-ribitylamino)uracil from GTP: step 1/4. Functionally, catalyzes the conversion of GTP to 2,5-diamino-6-ribosylamino-4(3H)-pyrimidinone 5'-phosphate (DARP), formate and pyrophosphate. The sequence is that of GTP cyclohydrolase-2 from Pseudomonas aeruginosa (strain UCBPP-PA14).